Here is a 158-residue protein sequence, read N- to C-terminus: Phosphopantetheine adenylyltransferase (158 aa).

Ser8 is a substrate binding site. ATP is bound by residues 8–9 (SF) and His16. Positions 40, 72, and 86 each coordinate substrate. Residues 87–89 (GLR), Glu97, and 122–128 (HSFLSSS) contribute to the ATP site.

This sequence belongs to the bacterial CoaD family. As to quaternary structure, homohexamer. Mg(2+) is required as a cofactor.

It is found in the cytoplasm. The enzyme catalyses (R)-4'-phosphopantetheine + ATP + H(+) = 3'-dephospho-CoA + diphosphate. The protein operates within cofactor biosynthesis; coenzyme A biosynthesis; CoA from (R)-pantothenate: step 4/5. In terms of biological role, reversibly transfers an adenylyl group from ATP to 4'-phosphopantetheine, yielding dephospho-CoA (dPCoA) and pyrophosphate. This is Phosphopantetheine adenylyltransferase from Prochlorococcus marinus (strain NATL1A).